Reading from the N-terminus, the 404-residue chain is MKILTINTGSSSLKFTLYKHKNTQILVSGTIEKIKTKKSIIKIKTKNGLLEKTDKHIKSHKEALKQLIRILTNKKLKIIENPDEIQGIGHRIVHGGPSFKNSTILNTNTLSELKKISKLAPLHNPIAIKVIEITLKIFPNAKQVLCFDTSWHKTMNENAFLYATPYSWYKDYNIRKYGFHGLSYSYITKRVATILNKPKEDLNLIILHLGNGSSINAVKKGLSYDTSMGLTPLEGLVMGTRSGDIDPAIIPLMSKLLNKTPKKIEEILNKQSGMLGISLKSNDLRDIWEGVKNNEYNSKLAVEIMAYRIKKYIGSYLAVLDFNIDAIIFTAGIGVTDYGIRELSLKGFEKIGIEIDPQKNNLARDKHTESDISSEKSKTKILVIPTNEELTILEDTYNLITKPS.

Asn-7 contacts Mg(2+). Lys-14 serves as a coordination point for ATP. A substrate-binding site is contributed by Arg-91. Asp-148 functions as the Proton donor/acceptor in the catalytic mechanism. ATP contacts are provided by residues 208–212 and 283–285; these read HLGNG and DLR. Glu-388 serves as a coordination point for Mg(2+).

This sequence belongs to the acetokinase family. As to quaternary structure, homodimer. The cofactor is Mg(2+). Mn(2+) serves as cofactor.

It localises to the cytoplasm. The catalysed reaction is acetate + ATP = acetyl phosphate + ADP. Its pathway is metabolic intermediate biosynthesis; acetyl-CoA biosynthesis; acetyl-CoA from acetate: step 1/2. Its function is as follows. Catalyzes the formation of acetyl phosphate from acetate and ATP. Can also catalyze the reverse reaction. In Borrelia turicatae (strain 91E135), this protein is Acetate kinase.